Here is a 643-residue protein sequence, read N- to C-terminus: Nucleolar GTP-binding protein 1 (643 aa).

Positions 168-340 constitute an OBG-type G domain; the sequence is RTLLICGYPN…VRNKACEKLL (173 aa). GTP is bound by residues 174–181, 220–224, and 288–291; these read GYPNVGKS, DTPGI, and NKTD. Residues 568-643 are disordered; sequence GDQEDSAPAG…KRGVGKTDFR (76 aa). Residues 594 to 622 show a composition bias toward basic and acidic residues; sequence MRSKAERMAKLERRERNRMARAGESDRHA.

The protein belongs to the TRAFAC class OBG-HflX-like GTPase superfamily. OBG GTPase family. NOG subfamily.

It is found in the nucleus. The protein resides in the nucleolus. In terms of biological role, involved in the biogenesis of the 60S ribosomal subunit. The sequence is that of Nucleolar GTP-binding protein 1 (NOG1) from Kluyveromyces lactis (strain ATCC 8585 / CBS 2359 / DSM 70799 / NBRC 1267 / NRRL Y-1140 / WM37) (Yeast).